An 89-amino-acid polypeptide reads, in one-letter code: Mitochondrial import inner membrane translocase subunit Tim9 (89 aa).

The residue at position 2 (A2) is an N-acetylalanine. The Twin CX3C motif signature appears at 28-52; it reads CFLDCVKDFTTREVKPEETTCSEHC. Disulfide bonds link C28/C52 and C32/C48.

Belongs to the small Tim family. As to quaternary structure, heterohexamer; composed of 3 copies of TIMM9 and 3 copies of TIMM10/TIM10A, named soluble 70 kDa complex. The complex forms a 6-bladed alpha-propeller structure and associates with the TIMM22 component of the TIM22 complex. Interacts with multi-pass transmembrane proteins in transit. Also forms a complex composed of TIMM9, TIMM10/TIM10A and FXC1/TIM10B. Ubiquitous, with highest expression in heart, kidney, liver and skeletal muscle.

It is found in the mitochondrion inner membrane. Functionally, mitochondrial intermembrane chaperone that participates in the import and insertion of multi-pass transmembrane proteins into the mitochondrial inner membrane. May also be required for the transfer of beta-barrel precursors from the TOM complex to the sorting and assembly machinery (SAM complex) of the outer membrane. Acts as a chaperone-like protein that protects the hydrophobic precursors from aggregation and guide them through the mitochondrial intermembrane space. The polypeptide is Mitochondrial import inner membrane translocase subunit Tim9 (TIMM9) (Homo sapiens (Human)).